The chain runs to 351 residues: Transmembrane protein 115 (351 aa).

The Cytoplasmic portion of the chain corresponds to 1 to 19; it reads MQRALPGARQHLGAILASA. Positions 1-205 are mediates homooligomerization; the sequence is MQRALPGARQ…FGLLSSWVYL (205 aa). The chain crosses the membrane as a helical span at residues 20 to 40; the sequence is SVVVKALCAAVLFLYLLSFAV. Residues 41–97 lie on the Lumenal side of the membrane; that stretch reads DTGCLAVTPGYLFPPNFWIWTLATHGLMEQHVWDVAISLTTVVVAGRLLEPLWGALE. Residues 98–118 form a helical membrane-spanning segment; it reads LLIFFSVVNVSVGLLGAFAYL. Residues 119–126 lie on the Cytoplasmic side of the membrane; sequence LTYMASFN. A helical membrane pass occupies residues 127 to 147; it reads LVYLFTVRIHGALGFLGGVLV. The Lumenal portion of the chain corresponds to 148 to 165; that stretch reads ALKQTMGDCVVLRVPQVR. A helical membrane pass occupies residues 166–186; that stretch reads VSVMPMLLLALLLLLRLATLL. Topologically, residues 187–351 are cytoplasmic; the sequence is QSPALASYGF…ITFEAAPPTL (165 aa). The interval 206–229 is mediates localization to the Golgi; it reads RFYQRHSRGRGDMADHFAFATFFP. The interval 301–351 is disordered; the sequence is QSIWPSMDDDEEESGAKVDSPLPSDKAPTPPGKGAAPESSLITFEAAPPTL. T329 carries the phosphothreonine modification.

It belongs to the TMEM115 family. As to quaternary structure, homooligomer. Interacts with COPB1. May interact with LMAN1. Interacts with the COG complex; probably through COG3. In terms of tissue distribution, expressed strongly in kidney and skeletal muscle, followed by liver, placenta, pancreas, and lung, with low amounts in heart and only traces in brain. Widely expressed with ubiquitous expression in epithelial tissues (at protein level).

The protein localises to the golgi apparatus. The protein resides in the golgi stack membrane. May play a role in retrograde transport of proteins from the Golgi to the endoplasmic reticulum. May indirectly play a role in protein glycosylation in the Golgi. In Homo sapiens (Human), this protein is Transmembrane protein 115.